The sequence spans 245 residues: Aliphatic sulfonates import ATP-binding protein SsuB 2 (245 aa).

Positions V15–I229 constitute an ABC transporter domain. ATP is bound at residue G47 to S54.

It belongs to the ABC transporter superfamily. Aliphatic sulfonates importer (TC 3.A.1.17.2) family. In terms of assembly, the complex is composed of two ATP-binding proteins (SsuB), two transmembrane proteins (SsuC) and a solute-binding protein (SsuA).

It localises to the cell inner membrane. The catalysed reaction is ATP + H2O + aliphatic sulfonate-[sulfonate-binding protein]Side 1 = ADP + phosphate + aliphatic sulfonateSide 2 + [sulfonate-binding protein]Side 1.. Functionally, part of the ABC transporter complex SsuABC involved in aliphatic sulfonates import. Responsible for energy coupling to the transport system. This Paracoccus denitrificans (strain Pd 1222) protein is Aliphatic sulfonates import ATP-binding protein SsuB 2.